Consider the following 278-residue polypeptide: Envelope glycoprotein L (278 aa).

The first 30 residues, 1–30 (MCRRPDCGFSFSPGPVILLWCCLLLPIVSS), serve as a signal peptide directing secretion. The 214-residue stretch at 43–256 (VPAECPELTR…DKYYAGLPPE (214 aa)) folds into the gL betaherpesvirus-type domain. Cysteine 154 and cysteine 159 are joined by a disulfide.

Belongs to the herpesviridae glycoprotein L (gL) family. Betaherpesvirinae gL subfamily. As to quaternary structure, interacts with glycoprotein H (gH); this interaction is necessary for the correct processing and cell surface expression of gH. Forms the envelope pentamer complex (PC) composed of gH, gL, UL128, UL130, and UL131A. The pentamer interacts with host NRP2. Forms the envelope trimer complex composed of gH, gL, and gO. The trimer interacts with host PDGFRA. The trimer also interacts with host EPHA2.

It is found in the virion membrane. The protein resides in the host cell membrane. The protein localises to the host Golgi apparatus. Its subcellular location is the host trans-Golgi network. The heterodimer glycoprotein H-glycoprotein L is required for the fusion of viral and plasma membranes leading to virus entry into the host cell. Acts as a functional inhibitor of gH and maintains gH in an inhibited form. Upon binding to host integrins, gL dissociates from gH leading to activation of the viral fusion glycoproteins gB and gH. In human cytomegalovirus, forms two distincts complexes to mediate viral entry, a trimer and a pentamer at the surface of the virion envelope. The gH-gL-gO trimer is required for infection in fibroblasts by interacting with host PDGFRA, and in glioblastoma cells by interacting with host EPHA2. The gH-gL-UL128-UL130-UL131A pentamer is essential for viral entry in epithelial, endothelial and myeloid cells via interaction with host NRP2. The polypeptide is Envelope glycoprotein L (Human cytomegalovirus (strain 5160) (HHV-5)).